Reading from the N-terminus, the 392-residue chain is Chaperone protein DnaJ 2 (392 aa).

The 66-residue stretch at 10-75 (DFYKELGVSS…AKRKEYDETR (66 aa)) folds into the J domain. The CR-type zinc finger occupies 161-239 (GVAMPLRLTS…CKGTGVTTRT (79 aa)). Zn(2+) is bound by residues C174, C177, C191, C194, C213, C216, C227, and C230. 4 CXXCXGXG motif repeats span residues 174–181 (CTNCHGSG), 191–198 (CPTCNGSG), 213–220 (CTDCRGSG), and 227–234 (CDECKGTG).

It belongs to the DnaJ family. Homodimer. The cofactor is Zn(2+).

It localises to the cytoplasm. Participates actively in the response to hyperosmotic and heat shock by preventing the aggregation of stress-denatured proteins and by disaggregating proteins, also in an autonomous, DnaK-independent fashion. Unfolded proteins bind initially to DnaJ; upon interaction with the DnaJ-bound protein, DnaK hydrolyzes its bound ATP, resulting in the formation of a stable complex. GrpE releases ADP from DnaK; ATP binding to DnaK triggers the release of the substrate protein, thus completing the reaction cycle. Several rounds of ATP-dependent interactions between DnaJ, DnaK and GrpE are required for fully efficient folding. Also involved, together with DnaK and GrpE, in the DNA replication of plasmids through activation of initiation proteins. This chain is Chaperone protein DnaJ 2, found in Mycolicibacterium paratuberculosis (strain ATCC BAA-968 / K-10) (Mycobacterium paratuberculosis).